A 287-amino-acid polypeptide reads, in one-letter code: uncharacterized protein (287 aa).

A THUMP domain is found at 133–239; that stretch reads CEVGKTKKMT…KNIIGISIVQ (107 aa). A disordered region spans residues 257–287; the sequence is ENTKSIPNDSKLDNFDRDKNQIINDKAEHAE. Residues 266-287 show a composition bias toward basic and acidic residues; sequence SKLDNFDRDKNQIINDKAEHAE.

This is an uncharacterized protein from Schizosaccharomyces pombe (strain 972 / ATCC 24843) (Fission yeast).